We begin with the raw amino-acid sequence, 619 residues long: Kinesin light chain 4 (619 aa).

The residue at position 2 (Ser-2) is an N-acetylserine. Residues Gly-32–Leu-150 adopt a coiled-coil conformation. A TPR 1 repeat occupies Gln-55 to Met-88. A compositionally biased stretch (basic and acidic residues) spans Tyr-156–Leu-175. The segment at Tyr-156–Ala-200 is disordered. Residue Ser-174 is modified to Phosphoserine. Acidic residues predominate over residues Phe-179 to Ser-188. 5 TPR repeats span residues Leu-211 to Thr-244, Ala-253 to Thr-286, Ala-295 to Val-328, Ala-337 to Gln-370, and Ala-379 to Gln-412. Ser-460 is subject to Phosphoserine. A TPR 7 repeat occupies Asn-464–Gly-497. Residues Ser-565, Ser-566, and Ser-590 each carry the phosphoserine modification. Residues Arg-571–Ser-619 form a disordered region. Residues Asn-592–Leu-608 show a composition bias toward polar residues. A compositionally biased stretch (low complexity) spans Ser-609–Ser-619. The residue at position 612 (Thr-612) is a Phosphothreonine.

It belongs to the kinesin light chain family. In terms of assembly, oligomeric complex composed of two heavy chains and two light chains.

It localises to the cytoplasm. Its subcellular location is the cytoskeleton. Its function is as follows. Kinesin is a microtubule-associated force-producing protein that may play a role in organelle transport. The light chain may function in coupling of cargo to the heavy chain or in the modulation of its ATPase activity. The protein is Kinesin light chain 4 (Klc4) of Rattus norvegicus (Rat).